We begin with the raw amino-acid sequence, 332 residues long: mRNA-decapping enzyme 1 (332 aa).

The segment covering 141-173 (ARAAKAASEAPQASVPAPTQAPAAPAQAPQMAP) has biased composition (low complexity). Positions 141-175 (ARAAKAASEAPQASVPAPTQAPAAPAQAPQMAPQA) are disordered.

This sequence belongs to the DCP1 family. In terms of assembly, may be a component of the decapping complex composed of dcap-1 and dcap-2. In terms of tissue distribution, expressed in neurons including touch receptor neurons and motor neurons.

It localises to the cytoplasm. The protein resides in the cytoplasmic granule. Component of the decapping complex necessary for the degradation of mRNAs, both in normal mRNA turnover and in nonsense-mediated mRNA decay. In contrast to orthologs, does not possess decapping activity and does not remove the 7-methyl guanine cap structure from mRNA molecules. In the nervous system, negatively regulates the expression of insulin-like peptide ins-7, which in turn promotes longevity. This may in part be through promoting the activity of daf-16 in distal tissues. Required for the developmental axon guidance and regrowth of PLM touch receptor neurons. In ADL sensory neurons, plays a role in ciliary shape formation. Acts in neurons to promote larval survival at high temperatures by negatively regulating lin-14 expression. This chain is mRNA-decapping enzyme 1, found in Caenorhabditis elegans.